A 213-amino-acid polypeptide reads, in one-letter code: Uridine kinase (213 aa).

ATP is bound at residue 13–20 (GASASGKS).

This sequence belongs to the uridine kinase family.

Its subcellular location is the cytoplasm. It carries out the reaction uridine + ATP = UMP + ADP + H(+). It catalyses the reaction cytidine + ATP = CMP + ADP + H(+). It functions in the pathway pyrimidine metabolism; CTP biosynthesis via salvage pathway; CTP from cytidine: step 1/3. The protein operates within pyrimidine metabolism; UMP biosynthesis via salvage pathway; UMP from uridine: step 1/1. This Haemophilus influenzae (strain PittGG) protein is Uridine kinase.